The chain runs to 298 residues: UDP-3-O-acyl-N-acetylglucosamine deacetylase (298 aa).

3 residues coordinate Zn(2+): H75, H232, and D236. Catalysis depends on H259, which acts as the Proton donor.

It belongs to the LpxC family. It depends on Zn(2+) as a cofactor.

It catalyses the reaction a UDP-3-O-[(3R)-3-hydroxyacyl]-N-acetyl-alpha-D-glucosamine + H2O = a UDP-3-O-[(3R)-3-hydroxyacyl]-alpha-D-glucosamine + acetate. Its pathway is glycolipid biosynthesis; lipid IV(A) biosynthesis; lipid IV(A) from (3R)-3-hydroxytetradecanoyl-[acyl-carrier-protein] and UDP-N-acetyl-alpha-D-glucosamine: step 2/6. Catalyzes the hydrolysis of UDP-3-O-myristoyl-N-acetylglucosamine to form UDP-3-O-myristoylglucosamine and acetate, the committed step in lipid A biosynthesis. In Nitratiruptor sp. (strain SB155-2), this protein is UDP-3-O-acyl-N-acetylglucosamine deacetylase.